A 244-amino-acid chain; its full sequence is 5-oxoprolinase subunit A (244 aa).

The protein belongs to the LamB/PxpA family. In terms of assembly, forms a complex composed of PxpA, PxpB and PxpC.

It carries out the reaction 5-oxo-L-proline + ATP + 2 H2O = L-glutamate + ADP + phosphate + H(+). Functionally, catalyzes the cleavage of 5-oxoproline to form L-glutamate coupled to the hydrolysis of ATP to ADP and inorganic phosphate. This is 5-oxoprolinase subunit A from Escherichia fergusonii (strain ATCC 35469 / DSM 13698 / CCUG 18766 / IAM 14443 / JCM 21226 / LMG 7866 / NBRC 102419 / NCTC 12128 / CDC 0568-73).